A 480-amino-acid chain; its full sequence is MAKATEKRVKRAKKEESGSESEDNDAIAQEILDTTKSDNEEEEPKKSSKNYTSVEVDESEEQTKTFKDLGVIDSICETCEELKFTKPTPIQAQSIPYALEGRDIIGLAQTGSGKTAAFAIPVLQSLYENPQPLYCVVLAPTRELAYQISETFEALGSAMGLRTAVVVGGMNMMTQAVALSKKPHVIVATPGRLVDHLENTKGFSLRTLKFLVMDEADRLLDMEFGPSLDKILKVIPRQRNTYLFSATMTSKVEKLQRASLVDPVRVAVSTKYQTADNLLQYMVFCPFKHKDTHLVYLVSENAGNSMIIFARTKSDTQRISLLLRNLGYGAIPLHGDLSQTARLGALNKFKSGSRNILIATDVASRGLDIPAVDLVINYDIPSDSKSYIHRVGRTARAGRAGKSVALVSQYDLELYLRIEGALGKKLDSYPLESEAVMLFSERVAEASRAAIQEMKGEDGTKKRSKFDKKRRRDEMDIGEQ.

Basic and acidic residues-rich tracts occupy residues 1–17 (MAKA…KEES) and 33–46 (DTTK…EPKK). The segment at 1 to 63 (MAKATEKRVK…VEVDESEEQT (63 aa)) is disordered. The short motif at 64–92 (KTFKDLGVIDSICETCEELKFTKPTPIQA) is the Q motif element. Residues 95–266 (IPYALEGRDI…RASLVDPVRV (172 aa)) enclose the Helicase ATP-binding domain. Residue 108 to 115 (AQTGSGKT) participates in ATP binding. The DEAD box motif lies at 214-217 (DEAD). In terms of domain architecture, Helicase C-terminal spans 277–437 (NLLQYMVFCP…SYPLESEAVM (161 aa)). Residues 450–480 (AIQEMKGEDGTKKRSKFDKKRRRDEMDIGEQ) are disordered. Over residues 462 to 471 (KRSKFDKKRR) the composition is skewed to basic residues.

Belongs to the DEAD box helicase family. DDX47/RRP3 subfamily. As to quaternary structure, interacts with the SSU processome.

Its subcellular location is the nucleus. It carries out the reaction ATP + H2O = ADP + phosphate + H(+). ATP-dependent rRNA helicase required for pre-ribosomal RNA processing. Involved in the maturation of the 35S-pre-rRNA and to its cleavage to mature 18S rRNA. This is ATP-dependent rRNA helicase RRP3 from Yarrowia lipolytica (strain CLIB 122 / E 150) (Yeast).